The chain runs to 48 residues: Keratin-associated protein 22-1 (48 aa).

Interacts with hair keratins.

Its function is as follows. In the hair cortex, hair keratin intermediate filaments are embedded in an interfilamentous matrix, consisting of hair keratin-associated proteins (KRTAP), which are essential for the formation of a rigid and resistant hair shaft through their extensive disulfide bond cross-linking with abundant cysteine residues of hair keratins. The matrix proteins include the high-sulfur and high-glycine-tyrosine keratins. In Homo sapiens (Human), this protein is Keratin-associated protein 22-1 (KRTAP22-1).